The chain runs to 75 residues: Protease B inhibitor 2 (75 aa).

Thr-74 is modified (phosphothreonine).

This sequence belongs to the protease inhibitor I9 family. In terms of assembly, part of the heterodimeric LMA1 complex together with the thioredoxin II/TRX2. LMA1 binds to the ATPase SEC18.

The protein resides in the cytoplasm. Functionally, cytosolic inhibitor of vacuolar proteinase B (yscB), probably regulating protease B activity during limited proteolysis. PBI2 is a component of the LMA1 complex, which is involved in the facilitation of vesicle fusion such as homotypic vacuole and ER-derived COPII vesicle fusion with the Golgi. The chain is Protease B inhibitor 2 (PBI2) from Saccharomyces cerevisiae (strain ATCC 204508 / S288c) (Baker's yeast).